A 238-amino-acid polypeptide reads, in one-letter code: N-acetylneuraminic acid outer membrane channel protein NanC (238 aa).

An N-terminal signal peptide occupies residues 1 to 23 (MKKAKILSGVLLLCFSSPLISQA). The Periplasmic portion of the chain corresponds to 24–25 (AT). A transmembrane helix spans residues 26–32 (LDVRGGY). The Extracellular portion of the chain corresponds to 33–39 (RSGSHAY). Residues 40–49 (ETRLKVSEGW) are membrane-embedded. Over 50–52 (QNG) the chain is Periplasmic. At 53 to 61 (WWASMESNT) the chain is embedded in the membrane. Over 62–76 (WNTIHDNKKENAALN) the chain is Extracellular. The chain crosses the lipid bilayer at residues 77–86 (DVQVEVNYAI). At 87–91 (KLDDQ) the chain is on the periplasmic side. The segment at 92 to 102 (WTVRPGMLTHF) is a transmembrane helix. Topologically, residues 103 to 107 (SSNGT) are extracellular. A membrane pass occupies residues 108–117 (RYGPYVKLSW). Over 118–122 (DATKD) the chain is Periplasmic. A transmembrane helix spans residues 123-132 (LKFGIRYRYD). The Extracellular segment spans residues 133–151 (WKAYRQQDLSGDMSRDNVH). Positions 152 to 159 (RWDGYVTY) form a transmembrane segment. Topologically, residues 160–164 (HINSD) are periplasmic. A transmembrane span lies at residues 165–173 (FTFAWQTTL). Over 174 to 190 (YSKQNDYRYANHKKWAT) the chain is Extracellular. The hydrophobic stretch at 191–200 (ENAFVLQYHM) threads the membrane. Topologically, residues 201–203 (TPD) are periplasmic. The segment at 204–212 (ITPYIEYDY) is a transmembrane helix. The Extracellular segment spans residues 213–228 (LDRQGVYNGRDNLSEN). The segment at 229–236 (SYRIGVSF) is a transmembrane helix. Residues 237-238 (KL) are Periplasmic-facing.

Belongs to the oligogalacturonate-specific porin KdgM (TC 1.B.35) family. NanC subfamily. Monomer.

Its subcellular location is the cell outer membrane. It carries out the reaction N-acetylneuraminate(in) = N-acetylneuraminate(out). Its function is as follows. Outer membrane channel protein allowing the entry of N-acetylneuraminic acid (Neu5Ac, the most abundant sialic acid on host cell surfaces) into the bacteria. NanC proteins form high-conductance channels which are open at low membrane potentials and which have a weak anion selectivity. In Escherichia coli O6:H1 (strain CFT073 / ATCC 700928 / UPEC), this protein is N-acetylneuraminic acid outer membrane channel protein NanC (nanC).